We begin with the raw amino-acid sequence, 619 residues long: P-granule-associated protein deps-1 (619 aa).

Residues 62–101 form a required for prg-1 binding region; it reads NFDNIEEAKNLERRSKIPLKFGEVILWNESDCDHDKRIIL. Composition is skewed to low complexity over residues 563 to 592 and 600 to 619; these read SRATSARTTPAGSSIGSRSSIQSRASAATS and GPSSRRTPSGTPQSSTSSRV. Residues 563-619 are disordered; it reads SRATSARTTPAGSSIGSRSSIQSRASAATSVSSNRFVGPSSRRTPSGTPQSSTSSRV.

In terms of assembly, interacts (via N-terminus) with prg-1; the interaction is direct. May interact with edg-1. Expressed in germ cells.

The protein localises to the cytoplasmic granule. The protein resides in the cytoplasm. It is found in the perinuclear region. Its function is as follows. Component of P-granules which is required for P-granule formation and integrity in adult germ cells. Promotes the accumulation of glh-1 mRNA and localization of pgl-1 to P-granules. Involved in RNA-mediated gene silencing (RNAi) in the germline. In particular, it is required for piwi-interacting RNA (piRNA) gene silencing and positively regulates the formation of secondary 22G-RNAs, which are RNA-dependent RNA polymerase-derived endo-siRNAs, typically 22 nucleotides in length with a 5'guanosine residue. Its role in RNAi may also be through positively regulating the expression of the dsRNA-binding protein rde-4. Plays a role in small RNA-directed transgenerational epigenetic inheritance. The chain is P-granule-associated protein deps-1 from Caenorhabditis elegans.